A 502-amino-acid chain; its full sequence is Lysine--tRNA ligase (502 aa).

2 residues coordinate Mg(2+): E412 and E419.

Belongs to the class-II aminoacyl-tRNA synthetase family. Homodimer. It depends on Mg(2+) as a cofactor.

The protein localises to the cytoplasm. The enzyme catalyses tRNA(Lys) + L-lysine + ATP = L-lysyl-tRNA(Lys) + AMP + diphosphate. The protein is Lysine--tRNA ligase of Buchnera aphidicola subsp. Cinara cedri (strain Cc).